Reading from the N-terminus, the 938-residue chain is Mediator of RNA polymerase II transcription subunit 16 (938 aa).

It belongs to the Mediator complex subunit 16 family. Component of the Mediator complex.

Its subcellular location is the nucleus. In terms of biological role, component of the Mediator complex, a coactivator involved in the regulated transcription of nearly all RNA polymerase II-dependent genes. Mediator functions as a bridge to convey information from gene-specific regulatory proteins to the basal RNA polymerase II transcription machinery. Mediator is recruited to promoters by direct interactions with regulatory proteins and serves as a scaffold for the assembly of a functional preinitiation complex with RNA polymerase II and the general transcription factors. The polypeptide is Mediator of RNA polymerase II transcription subunit 16 (SIN4) (Eremothecium gossypii (strain ATCC 10895 / CBS 109.51 / FGSC 9923 / NRRL Y-1056) (Yeast)).